The following is a 328-amino-acid chain: UPF0194 membrane protein YE2891 (328 aa).

Positions Met-1–Gly-22 are cleaved as a signal peptide. Coiled coils occupy residues Tyr-80–Glu-109 and Ala-139–Leu-208.

The protein belongs to the UPF0194 family.

It is found in the periplasm. The polypeptide is UPF0194 membrane protein YE2891 (Yersinia enterocolitica serotype O:8 / biotype 1B (strain NCTC 13174 / 8081)).